A 158-amino-acid chain; its full sequence is SsrA-binding protein (158 aa).

This sequence belongs to the SmpB family.

It is found in the cytoplasm. Required for rescue of stalled ribosomes mediated by trans-translation. Binds to transfer-messenger RNA (tmRNA), required for stable association of tmRNA with ribosomes. tmRNA and SmpB together mimic tRNA shape, replacing the anticodon stem-loop with SmpB. tmRNA is encoded by the ssrA gene; the 2 termini fold to resemble tRNA(Ala) and it encodes a 'tag peptide', a short internal open reading frame. During trans-translation Ala-aminoacylated tmRNA acts like a tRNA, entering the A-site of stalled ribosomes, displacing the stalled mRNA. The ribosome then switches to translate the ORF on the tmRNA; the nascent peptide is terminated with the 'tag peptide' encoded by the tmRNA and targeted for degradation. The ribosome is freed to recommence translation, which seems to be the essential function of trans-translation. The protein is SsrA-binding protein of Hydrogenovibrio crunogenus (strain DSM 25203 / XCL-2) (Thiomicrospira crunogena).